Here is a 444-residue protein sequence, read N- to C-terminus: N-succinylarginine dihydrolase (444 aa).

Residues 19-28 (AGLSFGNVAS), asparagine 110, and 137-138 (HR) each bind substrate. Residue glutamate 174 is part of the active site. Arginine 214 contributes to the substrate binding site. The active site involves histidine 250. Substrate-binding residues include aspartate 252 and asparagine 362. Cysteine 368 (nucleophile) is an active-site residue.

It belongs to the succinylarginine dihydrolase family. Homodimer.

The enzyme catalyses N(2)-succinyl-L-arginine + 2 H2O + 2 H(+) = N(2)-succinyl-L-ornithine + 2 NH4(+) + CO2. Its pathway is amino-acid degradation; L-arginine degradation via AST pathway; L-glutamate and succinate from L-arginine: step 2/5. Its function is as follows. Catalyzes the hydrolysis of N(2)-succinylarginine into N(2)-succinylornithine, ammonia and CO(2). This Shewanella baltica (strain OS223) protein is N-succinylarginine dihydrolase.